A 323-amino-acid polypeptide reads, in one-letter code: tRNA dimethylallyltransferase (323 aa).

12–19 (GPTAAGKT) contacts ATP. Substrate is bound at residue 14–19 (TAAGKT). 2 interaction with substrate tRNA regions span residues 37–40 (DSAL) and 161–165 (QRLIR).

This sequence belongs to the IPP transferase family. As to quaternary structure, monomer. The cofactor is Mg(2+).

The enzyme catalyses adenosine(37) in tRNA + dimethylallyl diphosphate = N(6)-dimethylallyladenosine(37) in tRNA + diphosphate. Catalyzes the transfer of a dimethylallyl group onto the adenine at position 37 in tRNAs that read codons beginning with uridine, leading to the formation of N6-(dimethylallyl)adenosine (i(6)A). This is tRNA dimethylallyltransferase from Pseudomonas putida (strain ATCC 700007 / DSM 6899 / JCM 31910 / BCRC 17059 / LMG 24140 / F1).